A 518-amino-acid chain; its full sequence is Nitrogenase iron-iron protein alpha chain (518 aa).

Residues Cys49 and Cys75 each coordinate [8Fe-7S] cluster. Residues Cys257 and His423 each coordinate [8Fe-9S-C-homocitryl] cluster.

Hexamer of two alpha, two beta, and two delta chains. The cofactor is [8Fe-7S] cluster. [8Fe-9S-C-homocitryl] cluster serves as cofactor.

It catalyses the reaction N2 + 8 reduced [2Fe-2S]-[ferredoxin] + 16 ATP + 16 H2O = H2 + 8 oxidized [2Fe-2S]-[ferredoxin] + 2 NH4(+) + 16 ADP + 16 phosphate + 6 H(+). In terms of biological role, this iron-iron protein is part of the nitrogenase complex that catalyzes the key enzymatic reactions in nitrogen fixation. Other nitrogenase complexes utilize a molybdenum-iron protein or a vanadium-iron protein. This is Nitrogenase iron-iron protein alpha chain (anfD) from Ruminiclostridium hungatei (Clostridium hungatei).